Reading from the N-terminus, the 132-residue chain is L-ectoine synthase (132 aa).

This sequence belongs to the ectoine synthase family.

It carries out the reaction (2S)-4-acetamido-2-aminobutanoate = L-ectoine + H2O. The protein operates within amine and polyamine biosynthesis; ectoine biosynthesis; L-ectoine from L-aspartate 4-semialdehyde: step 3/3. Catalyzes the circularization of gamma-N-acetyl-alpha,gamma-diaminobutyric acid (ADABA) to ectoine (1,4,5,6-tetrahydro-2-methyl-4-pyrimidine carboxylic acid), which is an excellent osmoprotectant. In Rhodococcus jostii (strain RHA1), this protein is L-ectoine synthase.